The chain runs to 234 residues: Ribonuclease HII (234 aa).

Residues 47 to 234 form the RNase H type-2 domain; sequence IRIAGVDEVG…KTVHKILYQE (188 aa). A divalent metal cation is bound by residues Asp-53, Glu-54, and Asp-144.

It belongs to the RNase HII family. The cofactor is Mn(2+). Mg(2+) is required as a cofactor.

Its subcellular location is the cytoplasm. It carries out the reaction Endonucleolytic cleavage to 5'-phosphomonoester.. Endonuclease that specifically degrades the RNA of RNA-DNA hybrids. This Ruegeria pomeroyi (strain ATCC 700808 / DSM 15171 / DSS-3) (Silicibacter pomeroyi) protein is Ribonuclease HII.